The following is a 528-amino-acid chain: Endoglucanase 24 (528 aa).

The signal sequence occupies residues 1–24 (MGSKTKGCCGWLIVALVASLVATA). The active-site Nucleophile is the Asp-109. Asn-259 carries N-linked (GlcNAc...) asparagine glycosylation. His-446 is a catalytic residue. N-linked (GlcNAc...) asparagine glycosylation is present at Asn-487. Residues Asp-492 and Glu-501 contribute to the active site.

This sequence belongs to the glycosyl hydrolase 9 (cellulase E) family.

The protein localises to the secreted. It catalyses the reaction Endohydrolysis of (1-&gt;4)-beta-D-glucosidic linkages in cellulose, lichenin and cereal beta-D-glucans.. The protein is Endoglucanase 24 of Oryza sativa subsp. japonica (Rice).